The primary structure comprises 381 residues: Lipopolysaccharide 1,2-N-acetylglucosaminetransferase (381 aa).

This sequence belongs to the glycosyltransferase group 1 family. Glycosyltransferase 4 subfamily.

The protein resides in the cell inner membrane. It carries out the reaction UDP-N-acetyl-alpha-D-glucosamine + [lipopolysaccharide] = UDP + N-acetyl-alpha-D-glucosaminyl-[lipopolysaccharide].. It participates in bacterial outer membrane biogenesis; LPS core biosynthesis. Functionally, transferase involved in the biosynthesis of the core oligosaccharide region of lipopolysaccharide (LPS). Catalyzes the addition of the terminal N-acetyl-D-glucosamine (GlcNAc) group to the outer-core glucose II, the last step of the lipid A-core oligosaccharide biosynthesis. This chain is Lipopolysaccharide 1,2-N-acetylglucosaminetransferase, found in Salmonella typhimurium (strain LT2 / SGSC1412 / ATCC 700720).